The chain runs to 91 residues: UPF0358 protein Sca_0738 (91 aa).

It belongs to the UPF0358 family.

The chain is UPF0358 protein Sca_0738 from Staphylococcus carnosus (strain TM300).